An 863-amino-acid chain; its full sequence is Dipeptidyl peptidase 9 (863 aa).

The disordered stretch occupies residues Met1–Pro20. N-acetylalanine is present on Ala2. Residues Ser730, Asp808, and His840 each act as charge relay system in the active site. Ser730 serves as a coordination point for Val-boroPro.

The protein belongs to the peptidase S9B family. DPPIV subfamily. As to quaternary structure, homodimer. Forms a ternary complex with NLRP1, composed of a DPP9 homodimer, one full-length NLRP1 protein, and one cleaved C-terminus of NLRP1 (NACHT, LRR and PYD domains-containing protein 1, C-terminus). Forms a ternary complex with CARD8, composed of a DPP9 homodimer, one full-length NLRP1 protein, and one cleaved C-terminus of CARD8 (Caspase recruitment domain-containing protein 8, C-terminus). In the ternary complex, only one subunit of the DPP9 homodimer is bound to NLRP1 or CARD8. As to expression, ubiquitously expressed, with highest levels in liver, heart and muscle, and lowest levels in brain.

It localises to the cytoplasm. The protein localises to the cytosol. The protein resides in the nucleus. It carries out the reaction Release of an N-terminal dipeptide, Xaa-Yaa-|-Zaa-, from a polypeptide, preferentially when Yaa is Pro, provided Zaa is neither Pro nor hydroxyproline.. Inhibited by the serine proteinase inhibitor 4-(2-aminoethyl)benzenesulphonyl fluoride (AEBSF), and by di-isopropylfluorophosphate. Inhibited by Val-boroPro (Talabostat, PT-100), a non-selective inhibitor, which triggers pyroptosis in monocytes and macrophages. Val-boroPro inhibits activity by binding to the active site, mimicking a substrate-bound state, thereby displacing the C-terminal fragment of NLRP1, leading to activation of the NLRP1 inflammasome. In contrast, Val-boroPro does not directly displaces CARD8: it acts by promoting degradation of the N-terminal part of CARD8, leading to indirect disruption of the ternary complex. Chemical inhibition of DPP9 by Val-boroPro in HIV-1-infected cells activates the CARD8 inflammasome, triggering cell death, offering a promising strategy for the elimination of HIV-1 reservoirs in people living with HIV-1. Functionally, dipeptidyl peptidase that cleaves off N-terminal dipeptides from proteins having a Pro or Ala residue at position 2. Acts as a key inhibitor of caspase-1-dependent monocyte and macrophage pyroptosis in resting cells by preventing activation of NLRP1 and CARD8. Sequesters the cleaved C-terminal part of NLRP1 and CARD8, which respectively constitute the active part of the NLRP1 and CARD8 inflammasomes, in a ternary complex, thereby preventing their oligomerization and activation. The dipeptidyl peptidase activity is required to suppress NLRP1 and CARD8; however, neither NLRP1 nor CARD8 are bona fide substrates of DPP9, suggesting the existence of substrate(s) required for NLRP1 and CARD8 inhibition. The polypeptide is Dipeptidyl peptidase 9 (Homo sapiens (Human)).